Consider the following 193-residue polypeptide: uncharacterized protein (193 aa).

The disordered stretch occupies residues 55–94 (PVGGAAGARSLSQALPAPAPPPPPPPGLGPSSERPWPSPW). The segment covering 71–82 (APAPPPPPPPGL) has biased composition (pro residues).

This is an uncharacterized protein from Homo sapiens (Human).